The sequence spans 667 residues: Threonine--tRNA ligase (667 aa).

In terms of domain architecture, TGS spans 1 to 64; it reads MSEAISLTFP…TDGKIEIVTR (64 aa). Residues 245–553 form a catalytic region; sequence DHRRLGREMD…LIENFAGHMP (309 aa). Zn(2+) is bound by residues Cys-347, His-398, and His-530.

It belongs to the class-II aminoacyl-tRNA synthetase family. In terms of assembly, homodimer. Zn(2+) serves as cofactor.

The protein resides in the cytoplasm. The catalysed reaction is tRNA(Thr) + L-threonine + ATP = L-threonyl-tRNA(Thr) + AMP + diphosphate + H(+). Functionally, catalyzes the attachment of threonine to tRNA(Thr) in a two-step reaction: L-threonine is first activated by ATP to form Thr-AMP and then transferred to the acceptor end of tRNA(Thr). Also edits incorrectly charged L-seryl-tRNA(Thr). In Agrobacterium fabrum (strain C58 / ATCC 33970) (Agrobacterium tumefaciens (strain C58)), this protein is Threonine--tRNA ligase.